A 183-amino-acid chain; its full sequence is Ankyrin repeat domain-containing protein 39 (183 aa).

4 ANK repeats span residues 30–59 (DFER…DPSQ), 63–92 (AGYT…KCDA), 96–125 (GGAT…NPRL), and 129–158 (DGMT…ALKA). Ser-153 carries the post-translational modification Phosphoserine.

The protein belongs to the ANKRD39 family.

The polypeptide is Ankyrin repeat domain-containing protein 39 (ANKRD39) (Bos taurus (Bovine)).